A 194-amino-acid polypeptide reads, in one-letter code: Ribosome maturation factor RimM (194 aa).

Residues 92–190 (DDGYYDHELI…ALVVTPPEGL (99 aa)) enclose the PRC barrel domain.

Belongs to the RimM family. As to quaternary structure, binds ribosomal protein uS19.

Its subcellular location is the cytoplasm. Functionally, an accessory protein needed during the final step in the assembly of 30S ribosomal subunit, possibly for assembly of the head region. Essential for efficient processing of 16S rRNA. May be needed both before and after RbfA during the maturation of 16S rRNA. It has affinity for free ribosomal 30S subunits but not for 70S ribosomes. This Corynebacterium urealyticum (strain ATCC 43042 / DSM 7109) protein is Ribosome maturation factor RimM.